The chain runs to 304 residues: Cbb3-type cytochrome c oxidase subunit CcoP (304 aa).

A run of 2 helical transmembrane segments spans residues 11–31 and 61–81; these read LYVAGITVVSLIFCLVVLIVA and WWAGLFLVTIAFAVIYLALYP. 2 consecutive Cytochrome c domains span residues 129–209 and 216–296; these read QAMA…LSLS and VAAQ…WSLS. Residues cysteine 142, cysteine 145, histidine 146, methionine 185, cysteine 228, cysteine 231, histidine 232, and methionine 273 each coordinate heme c.

Belongs to the CcoP / FixP family. In terms of assembly, component of the cbb3-type cytochrome c oxidase at least composed of CcoN, CcoO, CcoQ and CcoP. The cofactor is heme c.

The protein localises to the cell inner membrane. The protein operates within energy metabolism; oxidative phosphorylation. Its function is as follows. C-type cytochrome. Part of the cbb3-type cytochrome c oxidase complex. CcoP subunit is required for transferring electrons from donor cytochrome c via its heme groups to CcoO subunit. From there, electrons are shuttled to the catalytic binuclear center of CcoN subunit where oxygen reduction takes place. The complex also functions as a proton pump. This is Cbb3-type cytochrome c oxidase subunit CcoP from Rubrivivax gelatinosus (Rhodocyclus gelatinosus).